Consider the following 292-residue polypeptide: 4-hydroxy-tetrahydrodipicolinate synthase (292 aa).

Threonine 46 lines the pyruvate pocket. The active-site Proton donor/acceptor is the tyrosine 134. The active-site Schiff-base intermediate with substrate is the lysine 162. Isoleucine 204 is a binding site for pyruvate.

It belongs to the DapA family. As to quaternary structure, homotetramer; dimer of dimers.

It is found in the cytoplasm. It carries out the reaction L-aspartate 4-semialdehyde + pyruvate = (2S,4S)-4-hydroxy-2,3,4,5-tetrahydrodipicolinate + H2O + H(+). It functions in the pathway amino-acid biosynthesis; L-lysine biosynthesis via DAP pathway; (S)-tetrahydrodipicolinate from L-aspartate: step 3/4. Functionally, catalyzes the condensation of (S)-aspartate-beta-semialdehyde [(S)-ASA] and pyruvate to 4-hydroxy-tetrahydrodipicolinate (HTPA). In Moorella thermoacetica (strain ATCC 39073 / JCM 9320), this protein is 4-hydroxy-tetrahydrodipicolinate synthase.